A 317-amino-acid polypeptide reads, in one-letter code: Transaldolase (317 aa).

The Schiff-base intermediate with substrate role is filled by Lys-126.

It belongs to the transaldolase family. Type 1 subfamily. As to quaternary structure, homodimer.

It localises to the cytoplasm. The enzyme catalyses D-sedoheptulose 7-phosphate + D-glyceraldehyde 3-phosphate = D-erythrose 4-phosphate + beta-D-fructose 6-phosphate. Its pathway is carbohydrate degradation; pentose phosphate pathway; D-glyceraldehyde 3-phosphate and beta-D-fructose 6-phosphate from D-ribose 5-phosphate and D-xylulose 5-phosphate (non-oxidative stage): step 2/3. In terms of biological role, transaldolase is important for the balance of metabolites in the pentose-phosphate pathway. This Burkholderia pseudomallei (strain K96243) protein is Transaldolase.